A 421-amino-acid chain; its full sequence is GTPase Obg (421 aa).

The Obg domain occupies 1 to 158; the sequence is MFIDVAKIEL…KTIKLELKLL (158 aa). Positions 21-40 are disordered; sequence AFRREKYEPSGGPAGGDGGD. The OBG-type G domain maps to 159–328; that stretch reads ADVGLIGLPN…LMYLIADTLD (170 aa). GTP is bound by residues 165–172, 190–194, 211–214, 281–284, and 309–311; these read GLPNVGKS, FTTLE, DIPG, NKTD, and SAA. Mg(2+)-binding residues include serine 172 and threonine 192. The 78-residue stretch at 344-421 folds into the OCT domain; the sequence is FEEEKEPDFK…IGDVEFDFYE (78 aa).

This sequence belongs to the TRAFAC class OBG-HflX-like GTPase superfamily. OBG GTPase family. In terms of assembly, monomer. Mg(2+) serves as cofactor.

The protein resides in the cytoplasm. Its function is as follows. An essential GTPase which binds GTP, GDP and possibly (p)ppGpp with moderate affinity, with high nucleotide exchange rates and a fairly low GTP hydrolysis rate. Plays a role in control of the cell cycle, stress response, ribosome biogenesis and in those bacteria that undergo differentiation, in morphogenesis control. This chain is GTPase Obg, found in Finegoldia magna (strain ATCC 29328 / DSM 20472 / WAL 2508) (Peptostreptococcus magnus).